A 248-amino-acid chain; its full sequence is Probable transcriptional regulatory protein Bind_0345 (248 aa).

This sequence belongs to the TACO1 family.

It localises to the cytoplasm. The protein is Probable transcriptional regulatory protein Bind_0345 of Beijerinckia indica subsp. indica (strain ATCC 9039 / DSM 1715 / NCIMB 8712).